We begin with the raw amino-acid sequence, 579 residues long: Probable N-acetylgalactosaminyltransferase 9 (579 aa).

At 1 to 12 (MLRYIIPRKKGT) the chain is on the cytoplasmic side. A helical; Signal-anchor for type II membrane protein membrane pass occupies residues 13–30 (FVIAAFLTVAFFCIVAYH). The Lumenal segment spans residues 31 to 579 (RNDRRRTKFQ…KWNFIDPAKA (549 aa)). N-linked (GlcNAc...) asparagine glycosylation is present at asparagine 67. 5 cysteine pairs are disulfide-bonded: cysteine 123-cysteine 356, cysteine 347-cysteine 427, cysteine 464-cysteine 483, cysteine 507-cysteine 520, and cysteine 545-cysteine 562. Residues 133–243 (LPKTSVIIIF…HGWLEPIVQR (111 aa)) form a catalytic subdomain A region. Residues aspartate 174 and arginine 204 each coordinate substrate. Aspartate 227 is a binding site for Mn(2+). A substrate-binding site is contributed by serine 228. Histidine 229 lines the Mn(2+) pocket. The segment at 302 to 364 (YIRSPTMAGG…PCSHVGHIFR (63 aa)) is catalytic subdomain B. Tryptophan 333 is a substrate binding site. Histidine 361 contacts Mn(2+). Residues arginine 364, histidine 367, and tyrosine 369 each coordinate substrate. Asparagine 370 carries an N-linked (GlcNAc...) asparagine glycan. A Ricin B-type lectin domain is found at 450–574 (AYGALHTVVS…KDEHQKWNFI (125 aa)).

The protein belongs to the glycosyltransferase 2 family. GalNAc-T subfamily. Mn(2+) serves as cofactor.

The protein localises to the golgi apparatus membrane. It functions in the pathway protein modification; protein glycosylation. Its function is as follows. Probable glycopeptide transferase involved in O-linked oligosaccharide biosynthesis. Glycopeptide transferases catalyze the transfer of an N-acetyl-D-galactosamine residue to an already glycosylated peptide. In contrast to other members of the family, it does not act as a peptide transferase that transfers GalNAc onto serine or threonine residue on peptides that have been tested. Some peptide transferase activity is however not excluded, considering that its appropriate peptide substrate may remain unidentified. The sequence is that of Probable N-acetylgalactosaminyltransferase 9 (gly-9) from Caenorhabditis elegans.